The sequence spans 424 residues: Putative polyketide beta-ketoacyl synthase 2 (424 aa).

Positions 13–416 constitute a Ketosynthase family 3 (KS3) domain; sequence SRRAVVTGLG…GSNSALVLRR (404 aa).

It belongs to the thiolase-like superfamily. Beta-ketoacyl-ACP synthases family.

In terms of biological role, involved in developmentally regulated synthesis of a compound biosynthetically related to polyketide antibiotics which is essential for spore color in Streptomyces coelicolor. The chain is Putative polyketide beta-ketoacyl synthase 2 from Streptomyces coelicolor (strain ATCC BAA-471 / A3(2) / M145).